A 291-amino-acid chain; its full sequence is GTPase Era (291 aa).

In terms of domain architecture, Era-type G spans 2–167; sequence KSGFVSIIGR…LDEIVKCLNE (166 aa). The G1 stretch occupies residues 10-17; sequence GRTNAGKS. Residue 10–17 coordinates GTP; the sequence is GRTNAGKS. Residues 36–40 are G2; it reads NATRR. Residues 57 to 60 form a G3 region; that stretch reads DTPG. GTP is bound by residues 57–61 and 116–119; these read DTPGL and NKVD. The tract at residues 116-119 is G4; the sequence is NKVD. A G5 region spans residues 146-148; sequence YSS. The KH type-2 domain maps to 186–274; sequence YRDFILESIY…LLKLFVTVKK (89 aa).

Belongs to the TRAFAC class TrmE-Era-EngA-EngB-Septin-like GTPase superfamily. Era GTPase family. Monomer.

The protein resides in the cytoplasm. The protein localises to the cell inner membrane. In terms of biological role, an essential GTPase that binds both GDP and GTP, with rapid nucleotide exchange. Plays a role in 16S rRNA processing and 30S ribosomal subunit biogenesis and possibly also in cell cycle regulation and energy metabolism. The polypeptide is GTPase Era (Campylobacter jejuni subsp. doylei (strain ATCC BAA-1458 / RM4099 / 269.97)).